A 54-amino-acid chain; its full sequence is Large ribosomal subunit protein bL33A (54 aa).

It belongs to the bacterial ribosomal protein bL33 family.

This Mycobacteroides abscessus (strain ATCC 19977 / DSM 44196 / CCUG 20993 / CIP 104536 / JCM 13569 / NCTC 13031 / TMC 1543 / L948) (Mycobacterium abscessus) protein is Large ribosomal subunit protein bL33A.